Here is a 1033-residue protein sequence, read N- to C-terminus: NACHT, LRR and PYD domains-containing protein 3 (1033 aa).

The Pyrin domain maps to M1–E91. S3 is modified (phosphoserine). C6 and C104 are joined by a disulfide. Y11 carries the post-translational modification Phosphotyrosine. C126 carries the S-palmitoyl cysteine lipid modification. The tract at residues K127–K130 is required for binding to phosphatidylinositol 4-phosphate (PtdIns4P). Y132, Y136, and Y145 each carry phosphotyrosine; by BTK. Positions Y136 to E206 constitute an FISNA domain. Phosphoserine is present on S157. A Phosphotyrosine; by BTK modification is found at Y164. ATP is bound at residue T165. S194 bears the Phosphoserine; by MAPK8 mark. Phosphoserine is present on S197. The region spanning H216–L532 is the NACHT domain. Residue G222–I230 participates in ATP binding. Phosphoserine is present on S261. A Phosphoserine; by PKD/PRKD1 modification is found at S291. A Glycyl lysine isopeptide (Lys-Gly) (interchain with G-Cter in ubiquitin) cross-link involves residue K320. S330 is modified (phosphoserine). Positions L351–Q355 match the KFERQ-like motif 1 motif. Residue K426 forms a Glycyl lysine isopeptide (Lys-Gly) (interchain with G-Cter in ubiquitin) linkage. An ATP-binding site is contributed by H518. The KFERQ-like motif 2 motif lies at Q601–E605. A Glycyl lysine isopeptide (Lys-Gly) (interchain with G-Cter in ubiquitin) cross-link involves residue K687. A phosphoserine mark is found at S725 and S732. 5 LRR repeats span residues S739–C759, N768–S789, K796–C816, N825–L846, and S853–C873. The short motif at Q795–E799 is the KFERQ-like motif 3 element. S803 carries the phosphoserine; by CSNK1A1 modification. Residues C834, C835, and C841 are each lipidated (S-palmitoyl cysteine). Phosphotyrosine is present on Y858. K875 is covalently cross-linked (Glycyl lysine isopeptide (Lys-Gly) (interchain with G-Cter in ubiquitin)). 4 LRR repeats span residues N882–S903, N910–C930, K939–T960, and S967–E988. A lipid anchor (S-palmitoyl cysteine) is attached at C955. Residue K970 forms a Glycyl lysine isopeptide (Lys-Gly) (interchain with G-Cter in ubiquitin) linkage. The short motif at E988–Q992 is the KFERQ-like motif 4 element. S1032 is modified (phosphoserine).

Belongs to the NLRP family. Sensor component of NLRP3 inflammasomes; inflammasomes are supramolecular complexes that assemble in the cytosol in response to pathogens and other damage-associated signals and play critical roles in innate immunity and inflammation. The core of NLRP3 inflammasomes consists of a signal sensor component (NLRP3), an adapter (PYCARD/ASC), which recruits an effector pro-inflammatory caspase (CASP1 and, possibly, CASP4 and CASP5). Homodecamer; inactive NLRP3 forms homodecameric double-ring cages that hide pyrin domains within NACHT-LRR rings to avoid premature activation. Interacts (via pyrin domain) with PYCARD/ASC (via pyrin domain); interaction is direct. Interacts (via LRR repeat domain) with NEK7 (via N-terminus); the interaction is required for the formation of the complex NLRP3:PYCARD, oligomerization of PYCARD/ASC and activation of CASP1. Interacts (via LRR repeat domain) with NR4A1/Nur77 (via N-terminus); the interaction is direct, requires activation of NR4A1 by its ligands NBRE-containing dsDNA and lipopolysaccharide, and stimulates the association of NLRP3 with NEK7 for non-canonical NLRP3 inflammasome activation. Interacts with CARD8; leading to inhibit formation of the NLRP3 inflammasome. Interacts with MEFV; this interaction targets NLRP3 to degradation by autophagy, hence preventing excessive IL1B- and IL18-mediated inflammation. Interacts with EIF2AK2/PKR; this interaction requires EIF2AK2 activity, is accompanied by EIF2AK2 autophosphorylation and promotes inflammasome assembly in response to specific stimuli. Interacts with GBP5 (via DAPIN domain); this interaction promotes inflammasome assembly in response to microbial and soluble, but not crystalline, agents. Interacts with PML (isoform PML-1) (via the leucine-rich repeat (LRR) domain); PML-mediated increase in NLRP3 inflammasome activation does not depend upon this interaction. Interacts (via NACHT domain) with DHX33 (via DEAH box); NLRP3 activation in presence of cytosolic dsRNA is mediated by DHX33. Interacts (via NACHT and LRR domains) with ARRB2; this interaction is direct and inducible by polyunsaturated fatty acids (PUFAs). Interacts (via NACHT domain) with DDX3X under both LPS-primed and inflammasome-activating conditions. Interacts with IRF4 (via the LRR domain); this interaction is direct and is required for optimal IRF4 binding to IL4 promoter and efficient IL4 transactivation during differentiation of Th2 helper T-cells. Interacts with MAVS; promoting localization to mitochondria and activation of the NLRP3 inflammasome. Interacts with MARK4; promoting localization of NLRP3 to the microtubule organizing center (MTOC). Interacts with TRIM50; this interaction also promotes NLRP3 oligomerization and subsequent inflammasome activation. Interacts with IRGM; preventing NLRP3 inflammasome assembly and promoting NLRP3 degradation. Interacts (via KFERQ-like motifs) with HSPA8/HSC70; promoting NLRP3 degradation by the chaperone-mediated autophagy pathway. Interacts (via NACHT and LLR domains) with ABHD8; this interaction is enhanced in the presence of NLRP3 inflammasome inducers, such as ATP, nigericin, silica, or alum. Interaction with ABHD8 leads the recruitment of ZDHHC12, hence facilitating NLRP3 palmitoylation and degradation by the chaperone-mediated autophagy pathway (CMA), therefore attenuating NLRP3 inflammasome activation. Post-translationally, phosphorylation at Ser-194 by MAPK8/JNK1 increases inflammasome activation by promoting deubiquitination by BRCC3 and NLRP3 homooligomerization. Phosphorylation at Ser-803 by CSNK1A1 prevents inflammasome activation by preventing NEK7 recruitment. Phosphorylation at Ser-3 in the pyrin domain inhibits homomultimerization of NLRP3 and activation of the NLRP3 inflammasome: dephosphorylation by protein phosphatase 2A (PP2A) promotes assembly of the NLRP3 inflammasome. Phosphorylation at Ser-291 by PKD/PRKD1 promotes NLRP3 inflammasome assembly. Phosphorylation by ERK1/MAPK3 promotes NLRP3 inflammasome assembly. Phosphorylation by BTK (at Tyr-132, Tyr-136, Tyr-145 and Tyr-164) in the region that mediates binding to phosphatidylinositol phosphate, promotes relocalization of NLRP3 and assembly of the NLRP3 inflammasome. Phosphorylation at Tyr-858 inhibits NLRP3 inflammasome assembly: dephosphorylation by PTPN22 promotes inflammasome activation Phosphorylated by LATS1 and LATS2 at Ser-261 following palmitoylation by ZDHHC1, promoting its relocalization to the microtubule organizing center (MTOC), where NLRP3 is activated by NEK7, leading to inflammasome assembly and activation. In terms of processing, ubiquitinated; undergoes both 'Lys-48'- and 'Lys-63'-linked polyubiquitination. Ubiquitination does not lead to degradation, but inhibits inflammasome activation. Deubiquitination is catalyzed by BRCC3 and associated with NLRP3 activation and inflammasome assembly. This process can be induced by the activation of Toll-like receptors (by LPS), through a non-transcriptional pathway dependent on the mitochondrial production of reactive oxygen species, and by ATP. Ubiquitinated by TRIM31 via 'Lys-48'-linked ubiquitination, leading to its degradation by the proteasome. Ubiquitinated at Lys-687 by the SCF(FBXL2) complex, leading to its degradation by the proteasome. Ubiquitinated by TRIM35 via 'lys-48' and 'Lys-63'-linked ubiquitination leading to inhibition of NLRP3 inflammasome activation. Undergoes 'Lys-27'-linked polyubiquitination by MARCHF5, leading to NLRP3-NEK7 complex formation and NLRP3 oligomerization. The disulfide bond in the pyrin domain might play a role in reactive oxygen species-mediated activation. Post-translationally, palmitoylation by ZDHHC12 promotes NLRP3 degradation by the chaperone-mediated autophagy pathway (CMA) and therefore limits NLRP3 inflammasome activation. Interaction with ZDHHC12, and hence NLRP3 palmitoylation, is enhanced by ABHD8. Following palmitoylation, HSPA8/HSC70 recognizes and binds the KFERQ-like motifs on NLRP3 and promotes NLRP3 recruitment to lysosomes, where it is degraded via the chaperone-mediated autophagy pathway in a LAMP2-dependent process. Palmitoylation at Cys-834 and Cys-835 by ZDHHC5 enhances its binding to NEK7 leading to inflammasome assembly and activation. Palmitoylation at Cys-126 and Cys-955 by ZDHHC1 facilitates phosphorylation at Ser-261 by LATS1 and LATS2, promoting its relocalization to the microtubule organizing center (MTOC), where NLRP3 is activated by NEK7, leading to inflammasome assembly and activation. Depalmitoylated by ABHD17A. In terms of processing, degraded via selective autophagy following interaction with Irgm1. Irgm1 promotes NLRP3 recruitment to autophagosome membranes, promoting its SQSTM1/p62-dependent autophagy-dependent degradation. As to expression, expressed with high levels in peripheral blood leukocytes, including Th2 lymphocytes and macrophages. Expressed at low levels in resting osteoblasts (at protein level).

The protein localises to the cytoplasm. It localises to the cytosol. Its subcellular location is the inflammasome. It is found in the cytoskeleton. The protein resides in the microtubule organizing center. The protein localises to the golgi apparatus membrane. It localises to the endoplasmic reticulum. Its subcellular location is the mitochondrion. It is found in the secreted. The protein resides in the nucleus. It catalyses the reaction ATP + H2O = ADP + phosphate + H(+). Its activity is regulated as follows. Under resting conditions, NLRP3 binds ADP and is autoinhibited. Inactive NLRP3 forms homodecameric double-ring cages that hide pyrin domains within NACHT-LRR rings to avoid premature activation. NLRP3 activation stimuli include extracellular ATP, nigericin, reactive oxygen species, crystals of monosodium urate or cholesterol, amyloid-beta fibers, environmental or industrial particles and nanoparticles, such as asbestos, silica, aluminum salts, cytosolic dsRNA, etc. Almost all stimuli trigger intracellular K(+) efflux. These stimuli lead to membrane perturbations that induce activation of NLRP3. Upon activation, NLRP3 is transported to microtubule organizing center (MTOC), where it is unlocked by NEK7, leading to its relocalization to dispersed trans-Golgi network (dTGN) vesicle membranes and recruitment of PYCARD/ASC for the formation of an active inflammasome complex. NEK7-activated NLRP3 forms a disk-shaped inflammasome. NLRP3 and PYCARD/ASC interact via their respective pyrin domains; interaction initiates speck formation (nucleation) which greatly enhances further addition of soluble PYCARD/ASC molecules to the speck in a prion-like polymerization process. Clustered PYCARD/ASC nucleates the formation of CASP1 filaments through the interaction of their respective CARD domains, acting as a platform for CASP1 polymerization and activation. Active CASP1 then processes IL1B and IL18 precursors, leading to the release of mature cytokines in the extracellular milieu and inflammatory response. NLRP3 inflammasome assembly is inhibited by IRGM, which impedes NLRP3 oligomerization. NLRP3 inflammasome is inhibited by cyclic AMP (cAMP), which directly binds NLRP3; inhibition is relieved by calcium-sensing receptor CASR, which inhibits production of cAMP. Specifically inhibited by sulfonylurea MCC950 (also named CP-456,773, CRID3), a potent and specific small-molecule inhibitor of the NLRP3 inflammasome that acts by preventing ATP hydrolysis. Functionally, sensor component of the NLRP3 inflammasome, which mediates inflammasome activation in response to defects in membrane integrity, leading to secretion of inflammatory cytokines IL1B and IL18 and pyroptosis. In response to pathogens and other damage-associated signals that affect the integrity of membranes, initiates the formation of the inflammasome polymeric complex composed of NLRP3, CASP1 and PYCARD/ASC. Recruitment of pro-caspase-1 (proCASP1) to the NLRP3 inflammasome promotes caspase-1 (CASP1) activation, which subsequently cleaves and activates inflammatory cytokines IL1B and IL18 and gasdermin-D (GSDMD), promoting cytokine secretion and pyroptosis. Activation of NLRP3 inflammasome is also required for HMGB1 secretion; stimulating inflammatory responses. Under resting conditions, ADP-bound NLRP3 is autoinhibited. NLRP3 activation stimuli include extracellular ATP, nigericin, reactive oxygen species, crystals of monosodium urate or cholesterol, amyloid-beta fibers, environmental or industrial particles and nanoparticles, such as asbestos, silica, aluminum salts, cytosolic dsRNA, etc. Almost all stimuli trigger intracellular K(+) efflux. These stimuli lead to membrane perturbation and activation of NLRP3. Upon activation, NLRP3 is transported to microtubule organizing center (MTOC), where it is unlocked by NEK7, leading to its relocalization to dispersed trans-Golgi network (dTGN) vesicle membranes and formation of an active inflammasome complex. Associates with dTGN vesicle membranes by binding to phosphatidylinositol 4-phosphate (PtdIns4P). Shows ATPase activity. Independently of inflammasome activation, regulates the differentiation of T helper 2 (Th2) cells and has a role in Th2 cell-dependent asthma and tumor growth. During Th2 differentiation, required for optimal IRF4 binding to IL4 promoter and for IRF4-dependent IL4 transcription. Binds to the consensus DNA sequence 5'-GRRGGNRGAG-3'. May also participate in the transcription of IL5, IL13, GATA3, CCR3, CCR4 and MAF. The sequence is that of NACHT, LRR and PYD domains-containing protein 3 from Mus musculus (Mouse).